Here is a 182-residue protein sequence, read N- to C-terminus: Ribosome-recycling factor (182 aa).

The tract at residues 137–158 (KKSEKESEISEDQSRDEQDNVQ) is disordered.

This sequence belongs to the RRF family.

It is found in the cytoplasm. Responsible for the release of ribosomes from messenger RNA at the termination of protein biosynthesis. May increase the efficiency of translation by recycling ribosomes from one round of translation to another. In Prochlorococcus marinus (strain MIT 9211), this protein is Ribosome-recycling factor.